We begin with the raw amino-acid sequence, 202 residues long: Secreted RxLR effector protein 93 (202 aa).

A signal peptide spans Met1 to Ala16. The segment at Thr29–Asp58 is disordered. Basic and acidic residues predominate over residues Ser37–Gln48. The RxLR-dEER signature appears at Arg49 to Arg61.

The protein belongs to the RxLR effector family.

The protein resides in the secreted. The protein localises to the host nucleus. In terms of biological role, secreted effector that completely suppresses the host cell death induced by cell death-inducing proteins. The chain is Secreted RxLR effector protein 93 from Plasmopara viticola (Downy mildew of grapevine).